The sequence spans 84 residues: Large ribosomal subunit protein bL27 (84 aa).

A disordered region spans residues 1–24; it reads MAHKKGGGSSKNGRDSNSQRLGVK.

This sequence belongs to the bacterial ribosomal protein bL27 family.

The protein is Large ribosomal subunit protein bL27 of Leptospira borgpetersenii serovar Hardjo-bovis (strain JB197).